The following is a 333-amino-acid chain: 3-isopropylmalate/3-methylmalate dehydrogenase (333 aa).

Positions 81, 91, 112, and 203 each coordinate substrate. Mg(2+) is bound by residues aspartate 203, aspartate 227, and aspartate 231. 260-272 is a binding site for NAD(+); that stretch reads GSAPDIAGKKIAN.

This sequence belongs to the isocitrate and isopropylmalate dehydrogenases family. As to quaternary structure, homotetramer. The cofactor is Mg(2+). Requires Mn(2+) as cofactor.

Its subcellular location is the cytoplasm. It catalyses the reaction (2R,3S)-3-isopropylmalate + NAD(+) = 4-methyl-2-oxopentanoate + CO2 + NADH. The catalysed reaction is (2R,3S)-3-methylmalate + NAD(+) = 2-oxobutanoate + CO2 + NADH. It carries out the reaction (R)-malate + NAD(+) = pyruvate + CO2 + NADH. Its pathway is amino-acid biosynthesis; L-leucine biosynthesis; L-leucine from 3-methyl-2-oxobutanoate: step 3/4. The protein operates within amino-acid biosynthesis; L-isoleucine biosynthesis; 2-oxobutanoate from pyruvate: step 3/3. Catalyzes the oxidation of 3-carboxy-2-hydroxy-4-methylpentanoate (3-isopropylmalate) to 3-carboxy-4-methyl-2-oxopentanoate, which decarboxylates to 4-methyl-2-oxopentanoate (2-oxoisocaproate). Also catalyzes the oxidative decarboxylation of 3-methylmalate to 2-oxobutyrate, and that of D-malate to pyruvate. Cannot use NADP(+) instead of NAD(+). Cannot catalyze the oxidation of L-malate, L-tartrate, D-tartrate, DL-isocitrate, or DL-lactate. The protein is 3-isopropylmalate/3-methylmalate dehydrogenase (leuB) of Methanocaldococcus jannaschii (strain ATCC 43067 / DSM 2661 / JAL-1 / JCM 10045 / NBRC 100440) (Methanococcus jannaschii).